Reading from the N-terminus, the 213-residue chain is ATP synthase peripheral stalk subunit OSCP, mitochondrial (213 aa).

The N-terminal 23 residues, 1-23, are a transit peptide targeting the mitochondrion; that stretch reads MAAPAVSGLSRQVRCFSTSVVRP. The SIFI-degron signature appears at 5 to 23; the sequence is AVSGLSRQVRCFSTSVVRP. 4 positions are modified to N6-acetyllysine: lysine 54, lysine 60, lysine 70, and lysine 73. At lysine 90 the chain carries N6-succinyllysine. Lysine 158 and lysine 162 each carry N6-acetyllysine; alternate. Residues lysine 158 and lysine 162 each carry the N6-succinyllysine; alternate modification. An N6-acetyllysine mark is found at lysine 172, lysine 176, and lysine 192. Lysine 199 carries the N6-succinyllysine modification.

Belongs to the ATPase delta chain family. In terms of assembly, component of the ATP synthase complex composed at least of ATP5F1A/subunit alpha, ATP5F1B/subunit beta, ATP5MC1/subunit c (homooctomer), MT-ATP6/subunit a, MT-ATP8/subunit 8, ATP5ME/subunit e, ATP5MF/subunit f, ATP5MG/subunit g, ATP5MK/subunit k, ATP5MJ/subunit j, ATP5F1C/subunit gamma, ATP5F1D/subunit delta, ATP5F1E/subunit epsilon, ATP5PF/subunit F6, ATP5PB/subunit b, ATP5PD/subunit d, ATP5PO/subunit OSCP. ATP synthase complex consists of a soluble F(1) head domain (subunits alpha(3) and beta(3)) - the catalytic core - and a membrane F(0) domain - the membrane proton channel (subunits c, a, 8, e, f, g, k and j). These two domains are linked by a central stalk (subunits gamma, delta, and epsilon) rotating inside the F1 region and a stationary peripheral stalk (subunits F6, b, d, and OSCP). Acetylation at Lys-162 decreases ATP production. Deacetylated by SIRT3. Post-translationally, in response to mitochondrial stress, the precursor protein is ubiquitinated by the SIFI complex in the cytoplasm before mitochondrial import, leading to its degradation. Within the SIFI complex, UBR4 initiates ubiquitin chain that are further elongated or branched by KCMF1.

It localises to the mitochondrion. The protein localises to the mitochondrion inner membrane. Subunit OSCP, of the mitochondrial membrane ATP synthase complex (F(1)F(0) ATP synthase or Complex V) that produces ATP from ADP in the presence of a proton gradient across the membrane which is generated by electron transport complexes of the respiratory chain. ATP synthase complex consist of a soluble F(1) head domain - the catalytic core - and a membrane F(1) domain - the membrane proton channel. These two domains are linked by a central stalk rotating inside the F(1) region and a stationary peripheral stalk. During catalysis, ATP synthesis in the catalytic domain of F(1) is coupled via a rotary mechanism of the central stalk subunits to proton translocation. In vivo, can only synthesize ATP although its ATP hydrolase activity can be activated artificially in vitro. Part of the complex F(0) domain. Part of the complex F(0) domain and the peripheric stalk, which acts as a stator to hold the catalytic alpha(3)beta(3) subcomplex and subunit a/ATP6 static relative to the rotary elements. The sequence is that of ATP synthase peripheral stalk subunit OSCP, mitochondrial from Homo sapiens (Human).